The sequence spans 480 residues: MLYRNRFLVLLALAGLLAFLSLSLQFFHLIPVSTTKNGGSSKSRKRIMPDPVTEPPTVDPVYEALLYCNIPSVAEHSMEGHAPHHYKLVSVHVFIRHGDRYPLYAIPKTKRPEIDCTLVASRKPYHPKLEAFVGHMLKGSGASFESPLGSLPLYPNHPLCEMGELTQTGVVQHLQNGQLLRDIYLRKHKLLPNNWSSDQLYLETTGKSRTLQSGLALLYGFLPEFDWKKVYFKHQPSALFCSGSCYCPLRNQYLEKEQRRQYLLRLKNSDLERTYGEMAKIVDIPTKQLRAANPIDSMLCHFCHNVSFPCSRSGCLGMEHFKVIKTHQIEDERERHEKLLYFGYSLLGAHPILNQTVNRMQRAALGWRDELFTLYSAHDVTLSPILSALGLLEARFPRFAARLVFELWQDRQKPSEHSVRILYNGADVTFHTSFCHDFHKHSPKPMCPLENLVRFVKRDMFVALDGSSTNYYDACHGEGA.

The Cytoplasmic portion of the chain corresponds to Met1–Arg6. The chain crosses the membrane as a helical; Signal-anchor for type II membrane protein span at residues Phe7 to Phe27. At His28–Ala480 the chain is on the lumenal side. The active-site Nucleophile is His97. N-linked (GlcNAc...) asparagine glycosylation is found at Asn194, Asn305, and Asn354. Asp379 (proton donor) is an active-site residue.

It belongs to the histidine acid phosphatase family. In terms of assembly, interacts with B3GAT3; the interaction increases the 2-phosphoxylose phosphatase activity of PXYLP1 during completion of linkage region formation in a B3GAT3-mediated manner.

Its subcellular location is the golgi apparatus membrane. The catalysed reaction is 3-O-[beta-D-GlcA-(1-&gt;3)-beta-D-Gal-(1-&gt;3)-beta-D-Gal-(1-&gt;4)-beta-D-2-O-P-Xyl]-L-seryl-[protein] + H2O = 3-O-(beta-D-GlcA-(1-&gt;3)-beta-D-Gal-(1-&gt;3)-beta-D-Gal-(1-&gt;4)-beta-D-Xyl)-L-seryl-[protein] + phosphate. Its function is as follows. Responsible for the 2-O-dephosphorylation of xylose in the glycosaminoglycan-protein linkage region of proteoglycans thereby regulating the amount of mature glycosaminoglycan (GAG) chains. Sulfated glycosaminoglycans (GAGs), including heparan sulfate and chondroitin sulfate, are synthesized on the so-called common GAG-protein linkage region (GlcUAbeta1-3Galbeta1-3Galbeta1-4Xylbeta1-O-Ser) of core proteins, which is formed by the stepwise addition of monosaccharide residues by the respective specific glycosyltransferases. Xylose 2-O-dephosphorylation during completion of linkage region formation is a prerequisite for the initiation and efficient elongation of the repeating disaccharide region of GAG chains. This Rattus norvegicus (Rat) protein is 2-phosphoxylose phosphatase 1.